The sequence spans 480 residues: Ribosomal RNA small subunit methyltransferase F (480 aa).

S-adenosyl-L-methionine contacts are provided by residues 125–131, glutamate 149, aspartate 176, and aspartate 194; that span reads AAAPGSK. The active-site Nucleophile is the cysteine 247.

It belongs to the class I-like SAM-binding methyltransferase superfamily. RsmB/NOP family.

The protein localises to the cytoplasm. The enzyme catalyses cytidine(1407) in 16S rRNA + S-adenosyl-L-methionine = 5-methylcytidine(1407) in 16S rRNA + S-adenosyl-L-homocysteine + H(+). Functionally, specifically methylates the cytosine at position 1407 (m5C1407) of 16S rRNA. This is Ribosomal RNA small subunit methyltransferase F from Enterobacter sp. (strain 638).